Reading from the N-terminus, the 252-residue chain is Anamorsin homolog (252 aa).

An N-terminal SAM-like domain region spans residues 1–153 (MINFSNTLII…AENPDFNKSD (153 aa)). The linker stretch occupies residues 153–166 (DDDNNLVSSDEEIY). [2Fe-2S] cluster-binding residues include Cys-169, Cys-180, Cys-183, and Cys-185. Residues 169–185 (CEDKKKVVNRVCDNCTC) form a fe-S binding site A region. The [4Fe-4S] cluster site is built by Cys-215, Cys-218, Cys-226, and Cys-229. 2 short sequence motifs (cx2C motif) span residues 215–218 (CGNC) and 226–229 (CGSC). A fe-S binding site B region spans residues 215-229 (CGNCYLGDAFRCGSC).

Belongs to the anamorsin family. Monomer. It depends on [2Fe-2S] cluster as a cofactor. [4Fe-4S] cluster is required as a cofactor.

It localises to the cytoplasm. Its subcellular location is the mitochondrion intermembrane space. Component of the cytosolic iron-sulfur (Fe-S) protein assembly (CIA) machinery. Required for the maturation of extramitochondrial Fe-S proteins. Part of an electron transfer chain functioning in an early step of cytosolic Fe-S biogenesis, facilitating the de novo assembly of a [4Fe-4S] cluster on the cytosolic Fe-S scaffold complex. Electrons are transferred from NADPH via a FAD- and FMN-containing diflavin oxidoreductase. Together with the diflavin oxidoreductase, also required for the assembly of the diferric tyrosyl radical cofactor of ribonucleotide reductase (RNR), probably by providing electrons for reduction during radical cofactor maturation in the catalytic small subunit. The sequence is that of Anamorsin homolog (DRE2) from Plasmodium berghei (strain Anka).